A 361-amino-acid chain; its full sequence is tRNA/tmRNA (uracil-C(5))-methyltransferase (361 aa).

Gln-185, Tyr-213, Asn-218, Glu-234, and Asp-294 together coordinate S-adenosyl-L-methionine. The active-site Nucleophile is the Cys-319. The active-site Proton acceptor is the Glu-353.

The protein belongs to the class I-like SAM-binding methyltransferase superfamily. RNA M5U methyltransferase family. TrmA subfamily.

The catalysed reaction is uridine(54) in tRNA + S-adenosyl-L-methionine = 5-methyluridine(54) in tRNA + S-adenosyl-L-homocysteine + H(+). It carries out the reaction uridine(341) in tmRNA + S-adenosyl-L-methionine = 5-methyluridine(341) in tmRNA + S-adenosyl-L-homocysteine + H(+). Dual-specificity methyltransferase that catalyzes the formation of 5-methyluridine at position 54 (m5U54) in all tRNAs, and that of position 341 (m5U341) in tmRNA (transfer-mRNA). The protein is tRNA/tmRNA (uracil-C(5))-methyltransferase of Pseudomonas putida (strain ATCC 47054 / DSM 6125 / CFBP 8728 / NCIMB 11950 / KT2440).